A 154-amino-acid polypeptide reads, in one-letter code: Transcriptional repressor NrdR (154 aa).

The disordered stretch occupies residues 1–22; it reads MRCPFCGNDDTQVKDSRPTEDN. A zinc finger spans residues 3–34; that stretch reads CPFCGNDDTQVKDSRPTEDNSAIRRRRFCPAC. Residues 11-22 are compositionally biased toward basic and acidic residues; the sequence is TQVKDSRPTEDN. Residues 49–139 enclose the ATP-cone domain; the sequence is LTVVKSGGSR…VYKDFREVTD (91 aa).

The protein belongs to the NrdR family. The cofactor is Zn(2+).

In terms of biological role, negatively regulates transcription of bacterial ribonucleotide reductase nrd genes and operons by binding to NrdR-boxes. This chain is Transcriptional repressor NrdR, found in Rhodospirillum centenum (strain ATCC 51521 / SW).